Here is a 189-residue protein sequence, read N- to C-terminus: Flavin prenyltransferase UbiX (189 aa).

Residues 10–12 (GAS), Ser-36, 91–94 (STNT), and Arg-126 contribute to the FMN site. Dimethylallyl phosphate contacts are provided by Tyr-156 and Lys-172.

It belongs to the UbiX/PAD1 family.

The enzyme catalyses dimethylallyl phosphate + FMNH2 = prenylated FMNH2 + phosphate. Its function is as follows. Flavin prenyltransferase that catalyzes the synthesis of the prenylated FMN cofactor (prenyl-FMN) for 4-hydroxy-3-polyprenylbenzoic acid decarboxylase UbiD. The prenyltransferase is metal-independent and links a dimethylallyl moiety from dimethylallyl monophosphate (DMAP) to the flavin N5 and C6 atoms of FMN. This is Flavin prenyltransferase UbiX from Aquifex aeolicus (strain VF5).